We begin with the raw amino-acid sequence, 174 residues long: ATP-dependent protease subunit HslV (174 aa).

Threonine 2 is an active-site residue. Residues glycine 157, cysteine 160, and threonine 163 each coordinate Na(+).

This sequence belongs to the peptidase T1B family. HslV subfamily. In terms of assembly, a double ring-shaped homohexamer of HslV is capped on each side by a ring-shaped HslU homohexamer. The assembly of the HslU/HslV complex is dependent on binding of ATP.

The protein localises to the cytoplasm. The catalysed reaction is ATP-dependent cleavage of peptide bonds with broad specificity.. Its activity is regulated as follows. Allosterically activated by HslU binding. In terms of biological role, protease subunit of a proteasome-like degradation complex believed to be a general protein degrading machinery. The chain is ATP-dependent protease subunit HslV from Shewanella frigidimarina (strain NCIMB 400).